The following is a 76-amino-acid chain: Exodeoxyribonuclease 7 small subunit (76 aa).

This sequence belongs to the XseB family. In terms of assembly, heterooligomer composed of large and small subunits.

It localises to the cytoplasm. It carries out the reaction Exonucleolytic cleavage in either 5'- to 3'- or 3'- to 5'-direction to yield nucleoside 5'-phosphates.. Bidirectionally degrades single-stranded DNA into large acid-insoluble oligonucleotides, which are then degraded further into small acid-soluble oligonucleotides. In Geobacillus thermodenitrificans (strain NG80-2), this protein is Exodeoxyribonuclease 7 small subunit.